A 443-amino-acid polypeptide reads, in one-letter code: Autophagy-related protein 13 homolog (443 aa).

Disordered stretches follow at residues A232–H283 and A308–T333. Residues S240 to R253 are compositionally biased toward polar residues. Residues E268–H283 are compositionally biased toward basic and acidic residues. The segment covering A308 to S325 has biased composition (polar residues).

This sequence belongs to the ATG13 family. Metazoan subfamily. As to quaternary structure, interacts with unc-51 (via C-terminus). Interacts with lgg-1; the interaction is direct.

The protein resides in the cytoplasm. Its subcellular location is the cytosol. The protein localises to the preautophagosomal structure. It is found in the perikaryon. It localises to the cell projection. The protein resides in the axon. In terms of biological role, component of the unc-51/atg-13 complex required for autophagosome formation. Required for the degradation of germ cell specific P-granule components such as sepa-1 by autophagy in somatic cells. This ensures exclusive localization of the P-granules in germ cells. May function downstream of the let-363 (Tor) signaling pathway to mediate sepa-1 degradation. Plays a role in survival during limited food availability. This is Autophagy-related protein 13 homolog from Caenorhabditis elegans.